The sequence spans 373 residues: Probable G-protein coupled receptor 173 (373 aa).

Residues 1–26 are Extracellular-facing; it reads MANTTGEPEEVSGALSPPSAVAYVKL. N-linked (GlcNAc...) asparagine glycosylation occurs at Asn3. The chain crosses the membrane as a helical span at residues 27 to 47; it reads VLLGLIMCVSLAGNAILSLLV. Residues 48-59 are Cytoplasmic-facing; that stretch reads LKDRALHKAPYY. A helical transmembrane segment spans residues 60–80; the sequence is FLLDLCLADGIRSAVCFPFVL. Residues 81-97 are Extracellular-facing; that stretch reads ASVRHGSSWTFSALSCK. A disulfide bond links Cys96 and Cys174. A helical transmembrane segment spans residues 98 to 118; sequence IVAFMAVLFCFHAAFMLFCIS. At 119-139 the chain is on the cytoplasmic side; it reads VTRYMAIAHHRFYAKRMTLWT. A helical transmembrane segment spans residues 140-160; it reads CAAVICMAWTLSVAMAFPPVF. Residues 161–188 are Extracellular-facing; it reads DVGTYKFIREEDQCIFEHRYFKANDTLG. A glycan (N-linked (GlcNAc...) asparagine) is linked at Asn184. A helical transmembrane segment spans residues 189–209; that stretch reads FMLMLAVLMAATHAVYGKLLL. Residues 210-287 are Cytoplasmic-facing; the sequence is FEYRHRKMKP…VKGEKQLGRM (78 aa). Residues 288 to 308 form a helical membrane-spanning segment; that stretch reads FYAITLLFLLLWSPYIVACYW. The Extracellular segment spans residues 309–322; the sequence is RVFVKACAVPHRYL. Residues 323-343 traverse the membrane as a helical segment; that stretch reads ATAVWMSFAQAAVNPIVCFLL. The Cytoplasmic portion of the chain corresponds to 344 to 373; the sequence is NKDLKKCLRTHAPCWGTGGAPAPREPYCVM.

This sequence belongs to the G-protein coupled receptor 1 family.

The protein resides in the cell membrane. In terms of biological role, is a receptor for the SMIM20 derived peptides Phoenixin-14 and Phoenixin-20. It mediates the Phoenixin-14 and Phoenixin-20 augmentation of gonadotropin-releasing hormone (GNRH) signaling in the hypothalamus and pituitary gland. In the ovary, it mediates the effects of Phoenixin-14 and Phoenixin-20 induced granulosa cell proliferation during follicular growth. This is Probable G-protein coupled receptor 173 (GPR173) from Bos taurus (Bovine).